A 784-amino-acid chain; its full sequence is DNA repair and recombination protein RAD54-like (784 aa).

The tract at residues 1 to 50 (MRRSLAPSQRGPLRPESRHSFTPPLLKKNKRSCQQELEREQELDRKRQSA) is disordered. Residues 2 to 9 (RRSLAPSQ) are required for chromatin remodeling, strand pairing activities and coupling of ATPase activity. Phosphoserine is present on serine 20. Threonine 22 bears the Phosphothreonine mark. The segment covering 36-47 (ELEREQELDRKR) has biased composition (basic and acidic residues). The region spanning 172–346 (EGKRGNFNGC…YSLVNFVNPE (175 aa)) is the Helicase ATP-binding domain. 185-192 (DEMGLGKT) contacts ATP. The DEGH box signature appears at 297 to 300 (DEGH). Residues 503–660 (LLDFMLAAIR…NNESAEKHFT (158 aa)) form the Helicase C-terminal domain. The segment covering 747-756 (VASAEEAASE) has biased composition (low complexity). Residues 747–784 (VASAEEAASEQPEEKPDRRKRPSTPLSDDSADEDFLGF) form a disordered region. The span at 775-784 (DSADEDFLGF) shows a compositional bias: acidic residues.

This sequence belongs to the SNF2/RAD54 helicase family. As to quaternary structure, interacts (via N-terminus) with spn-A/Rad51.

Its subcellular location is the nucleus. Functionally, involved in mitotic DNA repair and meiotic recombination. Functions in the recombinational DNA repair pathway. Essential for interhomolog gene conversion (GC), but may have a less important role in intersister GC than spn-A/Rad51. In the presence of DNA, spn-A/Rad51 enhances the ATPase activity of okr/Rad54. This chain is DNA repair and recombination protein RAD54-like, found in Drosophila erecta (Fruit fly).